The primary structure comprises 789 residues: Kin of IRRE-like protein 1 (789 aa).

The N-terminal stretch at 1–47 is a signal peptide; it reads MTLENRSTCLMTCQSSLLPKKPRFLSQKMWAPHLVVAYLIFVTLALA. Residues asparagine 5, asparagine 78, and asparagine 172 are each glycosylated (N-linked (GlcNAc...) asparagine). The Extracellular segment spans residues 48 to 531; the sequence is LPGTQTRFSQ…REVLPVGIIA (484 aa). Ig-like C2-type domains follow at residues 49 to 147, 152 to 248, 255 to 335, 340 to 419, and 424 to 520; these read PGTQ…AKLT, PEDT…TSIE, PTVT…TLVN, PRIV…EVPL, and PPII…IQLE. Cysteine 74 and cysteine 132 are joined by a disulfide. Cystine bridges form between cysteine 175–cysteine 232 and cysteine 276–cysteine 319. N-linked (GlcNAc...) asparagine glycosylation occurs at asparagine 329. An intrachain disulfide couples cysteine 361 to cysteine 403. A Cell attachment site motif is present at residues 437–439; sequence RGD. Cysteines 445 and 504 form a disulfide. Asparagine 503 is a glycosylation site (N-linked (GlcNAc...) asparagine). The chain crosses the membrane as a helical span at residues 532–552; it reads GATIGAGILLVFSFAALVFFL. Residues 553 to 789 are Cytoplasmic-facing; that stretch reads YRRRKGSRKD…RFQQRMQTHV (237 aa). Serine 606 is subject to Phosphoserine. Tyrosine 637 and tyrosine 638 each carry phosphotyrosine; by FYN. Phosphotyrosine occurs at positions 654 and 657. The tract at residues 687-713 is disordered; that stretch reads RAPASDYGTEPTPSGPSAPGGTDTTSQ. The span at 694-712 shows a compositional bias: low complexity; that stretch reads GTEPTPSGPSAPGGTDTTS. The residue at position 756 (tyrosine 756) is a Phosphotyrosine.

This sequence belongs to the immunoglobulin superfamily. As to quaternary structure, interacts with TJP1/ZO-1 and with NPHS2/podocin (via the C-terminus). Interacts with NPHS1/nephrin (via the Ig-like domains); this interaction is dependent on KIRREL1 glycosylation. Homodimer (via the Ig-like domains). Interacts when tyrosine-phosphorylated with GRB2. In terms of processing, phosphorylation probably regulates the interaction with NPHS2. Phosphorylated at Tyr-637 and Tyr-638 by FYN, leading to GRB2 binding. N-glycosylated.

It localises to the cell membrane. Its function is as follows. Required for proper function of the glomerular filtration barrier. It is involved in the maintenance of a stable podocyte architecture with interdigitating foot processes connected by specialized cell-cell junctions, known as the slit diaphragm. It is a signaling protein that needs the presence of TEC kinases to fully trans-activate the transcription factor AP-1. This Rattus norvegicus (Rat) protein is Kin of IRRE-like protein 1 (Kirrel1).